Here is a 430-residue protein sequence, read N- to C-terminus: Histidine--tRNA ligase (430 aa).

Belongs to the class-II aminoacyl-tRNA synthetase family. Homodimer.

It is found in the cytoplasm. The enzyme catalyses tRNA(His) + L-histidine + ATP = L-histidyl-tRNA(His) + AMP + diphosphate + H(+). This Chlamydia abortus (strain DSM 27085 / S26/3) (Chlamydophila abortus) protein is Histidine--tRNA ligase.